We begin with the raw amino-acid sequence, 699 residues long: tRNA wybutosine-synthesizing protein 4 (699 aa).

S-adenosyl-L-methionine is bound by residues Arg-94, Gly-120, Asp-151, 197–198, and Glu-224; that span reads DL.

This sequence belongs to the methyltransferase superfamily. LCMT family.

The catalysed reaction is 7-[(3S)-3-amino-3-carboxypropyl]wyosine(37) in tRNA(Phe) + S-adenosyl-L-methionine = 7-[(3S)-(3-amino-3-methoxycarbonyl)propyl]wyosine(37) in tRNA(Phe) + S-adenosyl-L-homocysteine. The enzyme catalyses 7-[(3S)-(3-amino-3-methoxycarbonyl)propyl]wyosine(37) in tRNA(Phe) + S-adenosyl-L-methionine + CO2 = wybutosine(37) in tRNA(Phe) + S-adenosyl-L-homocysteine + 2 H(+). It participates in tRNA modification; wybutosine-tRNA(Phe) biosynthesis. Functionally, probable S-adenosyl-L-methionine-dependent methyltransferase that acts as a component of the wybutosine biosynthesis pathway. Wybutosine is a hyper modified guanosine with a tricyclic base found at the 3'-position adjacent to the anticodon of eukaryotic phenylalanine tRNA. May methylate the carboxyl group of leucine residues to form alpha-leucine ester residues. This chain is tRNA wybutosine-synthesizing protein 4 (PPM2), found in Eremothecium gossypii (strain ATCC 10895 / CBS 109.51 / FGSC 9923 / NRRL Y-1056) (Yeast).